A 167-amino-acid polypeptide reads, in one-letter code: Putative C-type lectin protein FPV008/FPV253 (167 aa).

In terms of domain architecture, C-type lectin spans 49-152 (CPDEWIGYNS…SCIFHERTIC (104 aa)). Intrachain disulfides connect Cys-77-Cys-152 and Cys-131-Cys-144.

The polypeptide is Putative C-type lectin protein FPV008/FPV253 (Vertebrata (FPV)).